The chain runs to 230 residues: Large ribosomal subunit protein uL1 (230 aa).

It belongs to the universal ribosomal protein uL1 family. In terms of assembly, part of the 50S ribosomal subunit.

Binds directly to 23S rRNA. The L1 stalk is quite mobile in the ribosome, and is involved in E site tRNA release. Its function is as follows. Protein L1 is also a translational repressor protein, it controls the translation of the L11 operon by binding to its mRNA. The polypeptide is Large ribosomal subunit protein uL1 (Bacillus anthracis (strain A0248)).